Here is a 108-residue protein sequence, read N- to C-terminus: Protein RnfH (108 aa).

The disordered stretch occupies residues 86-108 (ARRRRAEKAKEEGRANKVTGGRA).

The protein belongs to the UPF0125 (RnfH) family.

The sequence is that of Protein RnfH from Pseudoalteromonas atlantica (strain T6c / ATCC BAA-1087).